Reading from the N-terminus, the 1257-residue chain is MASCSFTRDQATRRLRGAAAAAAAALAAVVTTPLLSSGTPTALIGTGSSCPGAMWLSTATGSRSDSESEEEDLPVGEEVCKRGYLRKQKHGHRRYFVLKLETADAPARLEYYENARKFRHSVRAAAAAAAAAASGAAIPPLIPPRRVITLYQCFSVSQRADARYRHLIALFTQDEYFAMVAENESEQESWYLLLSRLILESKRRRCGTLGAQPDGEPAALAAAAAAEPPFYKDVWQVIVKPRGLGHRKELSGVFRLCLTDEEVVFVRLNTEVASVVVQLLSIRRCGHSEQYFFLEVGRSTVIGPGELWMQVDDCVVAQNMHELFLEKMRALCADEYRARCRSYSISIGAHLLTLLSARRHLGLVPLEPGGWLRRSRFEQFCHLRAIGDGEDEMLFTRRFVTPSEPVAHSRRGRLHLPRGRRSRRAVSVPASFFRRLAPSPARPRHPAEAPNNGARLSSEVSGSGSGNFGEEGNPQGKEDQEGSGGDYMPMNNWGSGNGRGSGGGQGSNGQGSSSHSSGGNQCSGEGQGSRGGQGSNGQGSGGNQCSRDGQGTAGGHGSGGGQRPGGGHGSGGGQGPGDGHGSGGGKNSGGGKGSGSGKGSDGDGERGKSLKKRSYFGKLTQSKQQQMPPPPPPPPPPPPAGGTGGKGKSGGRFRLYFCVDRGATKECKEAKEVKDAEIPEGAARGPHRARAFDEDEDDPYVPMRPGVATPLVSSSDYMPMAPQNVSASKKRHSRSPFEDSRGYMMMFPRVSPPPAPSPPKAPDTNKEDDSKDNDSESDYMFMAPGAGAIPKNPRNPQGGSSSKSWSSYFSLPNPFRSSPLGQNDNSEYVPMLPGKFLGRGLDKEVSYNWDPKDAASKPSGEGSFSKPGDGGSPSKPSDHEPPKNKAKRPNRLSFITKGYKIKPKPQKPTHEQREADSSSDYVNMDFTKRESNTPAPSTQGLPDSWGIIAEPRQSAFSNYVNVEFGVPFPNPANDLSDLLRAIPRANPLSLDSARWPLPPLPLSATGSNAIEEEGDYIEVIFNSAMTPAMALADSAIRYDAETGRIYVVDPFSECCMDISLSPSRCSEPPPVARLLQEEEQERRRPQSRSQSFFAAARAAVSAFPTDSLERDLSPSSAPAVASAAEPTLALSQVVAAASALAAAPGIGAAAAAAGFDSASARWFQPVANAADAEAVRGAQDVAGGSNPGAHNPSANLARGDNQAGGAAAAAAAPEPPPRSRRVPRPPEREDSDNDDDTHVRMDFARRDNQFDSPKRGR.

One can recognise a PH domain in the interval 78-199 (EVCKRGYLRK…WYLLLSRLIL (122 aa)). The IRS-type PTB domain occupies 231–335 (YKDVWQVIVK…EKMRALCADE (105 aa)). Disordered stretches follow at residues 406 to 653 (VAHS…GGRF), 678 to 921 (IPEG…SSDY), and 1179 to 1257 (QDVA…KRGR). Over residues 408-424 (HSRRGRLHLPRGRRSRR) the composition is skewed to basic residues. The YXXM motif 1 motif lies at 487 to 490 (YMPM). The segment covering 495-509 (SGNGRGSGGGQGSNG) has biased composition (gly residues). Over residues 510–524 (QGSSSHSSGGNQCSG) the composition is skewed to low complexity. Gly residues-rich tracts occupy residues 525-542 (EGQG…GSGG) and 551-599 (GTAG…SGKG). Pro residues predominate over residues 627–640 (MPPPPPPPPPPPPA). A compositionally biased stretch (gly residues) spans 641–650 (GGTGGKGKSG). The interval 678–800 (IPEGAARGPH…KNPRNPQGGS (123 aa)) is CRK-binding. 3 short sequence motifs (YXXM motif) span residues 700-703 (YVPM), 717-720 (YMPM), and 743-746 (YMMM). The segment covering 750-761 (VSPPPAPSPPKA) has biased composition (pro residues). Over residues 763 to 774 (DTNKEDDSKDND) the composition is skewed to basic and acidic residues. Positions 779-782 (YMFM) match the YXXM motif 5 motif. Low complexity predominate over residues 800–810 (SSSKSWSSYFS). Residues 815 to 826 (FRSSPLGQNDNS) show a composition bias toward polar residues. Residues 828–831 (YVPM) carry the YXXM motif 6 motif. Positions 840–855 (GLDKEVSYNWDPKDAA) are enriched in basic and acidic residues. A GRB2-binding region spans residues 895-897 (ITK). Phosphotyrosine is present on Tyr-921. Positions 921 to 924 (YVNM) match the YXXM motif 7 motif. Over residues 1236–1257 (DTHVRMDFARRDNQFDSPKRGR) the composition is skewed to basic and acidic residues.

As to quaternary structure, interacts with SOCS6 in response to stimulation with either insulin or IGF1. Interacts with CRK and CRKL. Interaction with CRK is stronger than with CRKL. Interacts with CRK via the phosphorylated YXXM motifs. Interacts with GRB2 and PIK3R1. Interacts with PLC-gamma, SHC1, PTK6, PPP4C and NISCH. Interacts with ASB4; this interaction promotes IRS4 proteasomal degradation. In terms of processing, phosphorylated on tyrosine residues in response to both insulin and IGF1 signaling. Phosphorylated on Tyr-921 in response to FGF2 signaling. Phosphorylation of Tyr-921 is required for GRB2, phospholipase C-gamma and phosphatidylinositol 3-kinase interaction. Post-translationally, ubiquitinated in a ASB4-dependent manner, leading to proteasomal degradation. In terms of tissue distribution, expressed in myoblasts. Expressed in liver and hepatocellular carcinoma.

Its subcellular location is the cell membrane. Acts as an interface between multiple growth factor receptors possessing tyrosine kinase activity, such as insulin receptor, IGF1R and FGFR1, and a complex network of intracellular signaling molecules containing SH2 domains. Involved in the IGF1R mitogenic signaling pathway. Promotes the AKT1 signaling pathway and BAD phosphorylation during insulin stimulation without activation of RPS6KB1 or the inhibition of apoptosis. Interaction with GRB2 enhances insulin-stimulated mitogen-activated protein kinase activity. May be involved in nonreceptor tyrosine kinase signaling in myoblasts. Plays a pivotal role in the proliferation/differentiation of hepatoblastoma cell through EPHB2 activation upon IGF1 stimulation. May play a role in the signal transduction in response to insulin and to a lesser extent in response to IL4 and GH on mitogenesis. Plays a role in growth, reproduction and glucose homeostasis. May act as negative regulators of the IGF1 signaling pathway by suppressing the function of IRS1 and IRS2. This Homo sapiens (Human) protein is Insulin receptor substrate 4 (IRS4).